A 350-amino-acid chain; its full sequence is Nicotinate-nucleotide--dimethylbenzimidazole phosphoribosyltransferase (350 aa).

The active-site Proton acceptor is E316.

Belongs to the CobT family.

It carries out the reaction 5,6-dimethylbenzimidazole + nicotinate beta-D-ribonucleotide = alpha-ribazole 5'-phosphate + nicotinate + H(+). The protein operates within nucleoside biosynthesis; alpha-ribazole biosynthesis; alpha-ribazole from 5,6-dimethylbenzimidazole: step 1/2. Functionally, catalyzes the synthesis of alpha-ribazole-5'-phosphate from nicotinate mononucleotide (NAMN) and 5,6-dimethylbenzimidazole (DMB). The protein is Nicotinate-nucleotide--dimethylbenzimidazole phosphoribosyltransferase of Pseudomonas syringae pv. syringae (strain B728a).